The following is a 247-amino-acid chain: uncharacterized protein (247 aa).

The tract at residues 161–187 (KEQSDATSDATTSEKNKSPECPKATTE) is disordered. The span at 172–187 (TSEKNKSPECPKATTE) shows a compositional bias: basic and acidic residues.

This is an uncharacterized protein from Mus musculus (Mouse).